The sequence spans 258 residues: uncharacterized protein (258 aa).

6 helical membrane passes run 21-41 (LIWLPIAMMIVGLTQPLTIYY), 73-93 (LSQFNTLGMALVIFSVMGSVA), 119-139 (WLIQSVIGIMSFAAGYGLAYY), 153-173 (FAASLGLYALWVIFIVTAGLA), 182-202 (GAAAACGIGLTAAVSFAVSLF), and 229-249 (FFGWSLTFSILCIMLLAVFSV).

The protein resides in the cell membrane. This is an uncharacterized protein from Bacillus subtilis (strain 168).